The primary structure comprises 334 residues: Ribonucleoside-diphosphate reductase small chain (334 aa).

Residues Asp-77, Glu-108, and His-111 each contribute to the Fe cation site. Tyr-115 is an active-site residue. Glu-171, Glu-205, and His-208 together coordinate Fe cation.

Belongs to the ribonucleoside diphosphate reductase small chain family. In terms of assembly, heterotetramer composed of a homodimer of the large subunit (R1) and a homodimer of the small subunit (R2). Larger multisubunit protein complex are also active, composed of (R1)n(R2)n. The cofactor is Fe cation.

It catalyses the reaction a 2'-deoxyribonucleoside 5'-diphosphate + [thioredoxin]-disulfide + H2O = a ribonucleoside 5'-diphosphate + [thioredoxin]-dithiol. Functionally, ribonucleoside-diphosphate reductase holoenzyme provides the precursors necessary for viral DNA synthesis. Allows virus growth in non-dividing cells. Catalyzes the biosynthesis of deoxyribonucleotides from the corresponding ribonucleotides. The protein is Ribonucleoside-diphosphate reductase small chain of Ornithodoros (relapsing fever ticks).